The following is a 214-amino-acid chain: NAD(P)H-quinone oxidoreductase subunit 6, chloroplastic (214 aa).

5 consecutive transmembrane segments (helical) span residues Phe10–Pro30, Ile32–Leu52, Ala61–Val81, Ile102–Pro122, and Leu163–Ile183.

This sequence belongs to the complex I subunit 6 family. NDH is composed of at least 16 different subunits, 5 of which are encoded in the nucleus.

The protein resides in the plastid. It is found in the chloroplast thylakoid membrane. It carries out the reaction a plastoquinone + NADH + (n+1) H(+)(in) = a plastoquinol + NAD(+) + n H(+)(out). The enzyme catalyses a plastoquinone + NADPH + (n+1) H(+)(in) = a plastoquinol + NADP(+) + n H(+)(out). In terms of biological role, NDH shuttles electrons from NAD(P)H:plastoquinone, via FMN and iron-sulfur (Fe-S) centers, to quinones in the photosynthetic chain and possibly in a chloroplast respiratory chain. The immediate electron acceptor for the enzyme in this species is believed to be plastoquinone. Couples the redox reaction to proton translocation, and thus conserves the redox energy in a proton gradient. The sequence is that of NAD(P)H-quinone oxidoreductase subunit 6, chloroplastic (ndhG) from Chlorokybus atmophyticus (Soil alga).